We begin with the raw amino-acid sequence, 65 residues long: Alpha-toxin OD1 (65 aa).

The region spanning 3 to 65 (RDAYIADDKN…VPIRIPGKCR (63 aa)) is the LCN-type CS-alpha/beta domain. The short motif at 9–11 (DDK) is the Important for toxin selectivity for individual Nav channel subtype (Nav1.6/SCN8A and Nav1.7/SCN9A), but not for toxin potency element. Intrachain disulfides connect cysteine 13-cysteine 64, cysteine 17-cysteine 37, cysteine 23-cysteine 47, and cysteine 27-cysteine 49. At arginine 65 the chain carries Arginine amide.

This sequence belongs to the long (4 C-C) scorpion toxin superfamily. Sodium channel inhibitor family. Alpha subfamily. In terms of tissue distribution, expressed by the venom gland.

It localises to the secreted. Its function is as follows. Alpha toxins bind voltage-independently at site-3 of sodium channels and inhibit the inactivation of the activated channels. The toxin affect mammalian sodium channels Nav1.7/SCN9A (EC(50)=4.5 nM), Nav1.4/SCN4A (EC(50)=9.6 nM), Nav1.6/SCN8A (EC(50)=30 nM), Nav1.5/SCN5A (only at micromolar concentrations), and insect sodium channel para/tipE (EC(50)=80 nM). In vivo, intraplantar administration of this toxin elicits pain behaviors, including licking and flinching of the hind paw. The protein is Alpha-toxin OD1 of Odontobuthus doriae (Yellow Iranian scorpion).